The sequence spans 121 residues: Basic phospholipase A2 homolog zhaoermiatoxin (121 aa).

7 disulfides stabilise this stretch: C26-C115, C28-C44, C43-C95, C49-C121, C50-C88, C57-C81, and C75-C86.

The protein belongs to the phospholipase A2 family. Group II subfamily. R49 sub-subfamily. Homodimer. Expressed by the venom gland.

It is found in the secreted. Its function is as follows. Snake venom phospholipase A2 homolog that induces myonecrosis, and edema. Has low myotoxic activity. This chain is Basic phospholipase A2 homolog zhaoermiatoxin, found in Protobothrops mangshanensis (Mangshan pitviper).